Consider the following 715-residue polypeptide: Fatty acid oxidation complex subunit alpha (715 aa).

Positions 1–190 are enoyl-CoA hydratase; the sequence is MTTTSAFMLS…KAGLVDDVVP (190 aa). Residues 306-714 are 3-hydroxyacyl-CoA dehydrogenase; it reads GPLNSVGILG…FWTNGETDQG (409 aa).

In the N-terminal section; belongs to the enoyl-CoA hydratase/isomerase family. The protein in the central section; belongs to the 3-hydroxyacyl-CoA dehydrogenase family. In terms of assembly, heterotetramer of two alpha chains (FadJ) and two beta chains (FadI).

It localises to the cytoplasm. It carries out the reaction a (3S)-3-hydroxyacyl-CoA = a (2E)-enoyl-CoA + H2O. The enzyme catalyses a 4-saturated-(3S)-3-hydroxyacyl-CoA = a (3E)-enoyl-CoA + H2O. The catalysed reaction is a (3S)-3-hydroxyacyl-CoA + NAD(+) = a 3-oxoacyl-CoA + NADH + H(+). It catalyses the reaction (3S)-3-hydroxybutanoyl-CoA = (3R)-3-hydroxybutanoyl-CoA. It functions in the pathway lipid metabolism; fatty acid beta-oxidation. Functionally, catalyzes the formation of a hydroxyacyl-CoA by addition of water on enoyl-CoA. Also exhibits 3-hydroxyacyl-CoA epimerase and 3-hydroxyacyl-CoA dehydrogenase activities. In Salmonella typhi, this protein is Fatty acid oxidation complex subunit alpha.